Reading from the N-terminus, the 1442-residue chain is Death-associated protein kinase 1 (1442 aa).

The 263-residue stretch at 13–275 (YDTGEELGSG…IQDSLQHPWI (263 aa)) folds into the Protein kinase domain. ATP contacts are provided by residues 19 to 27 (LGSGQFAVV) and K42. The active-site Proton acceptor is the D139. Residues 267-334 (QDSLQHPWIK…RSNMSVARSD (68 aa)) form a calmodulin-binding region. S289 carries the phosphoserine; by RPS6KA1 and RPS6KA3 modification. The segment at 292 to 301 (NMEKFKKFAA) is autoinhibitory domain. Residue S308 is modified to Phosphoserine; by autocatalysis. S319 and S333 each carry phosphoserine. 8 ANK repeats span residues 378-407 (HGTP…RIDV), 411-440 (GGSN…PLDV), 444-473 (SGET…NPDF), 477-506 (EEET…NVNI), 510-539 (EGET…DLNA), 543-572 (DGHI…FVDF), 576-605 (HGNT…NLDI), and 609-638 (YGRT…NVEA). One can recognise a Roc domain in the interval 681–955 (TQNLQPRIKL…NHLQEIRSQI (275 aa)). S734 carries the phosphoserine; by MAPK1 modification. The ANK 9 repeat unit spans residues 875-904 (KLKNPLRVVLVATHADIMNIPRPAGGEFGY). S1115 is subject to Phosphoserine. An ANK 10 repeat occupies 1164–1196 (DADIRLWVSGCRIANRGAELLVLLVNHGQGIEV). Residues 1312–1396 (KLSRLLDPPD…DAADFLLKAS (85 aa)) enclose the Death domain. S1433 carries the phosphoserine modification.

This sequence belongs to the protein kinase superfamily. CAMK Ser/Thr protein kinase family. DAP kinase subfamily. Interacts with KLHL20. Interacts (via death domain) with MAPK1 and MAPK3. Interacts with MAP1B (via N-terminus). Interacts with PRKD1 in an oxidative stress-regulated manner. Interacts with PIN1, PDCD6, BECN1, TSC2 and STX1A. Interacts (via kinase domain) with DAPK3 (via kinase domain). Interacts with GRINB. Interacts (via death domain) with UNC5B (via death domain). Interacts with UNC5C (via death domain). Mg(2+) is required as a cofactor. Ubiquitinated by the BCR(KLHL20) E3 ubiquitin ligase complex, leading to its degradation by the proteasome. Post-translationally, in response to mitogenic stimulation (PMA or EGF), phosphorylated at Ser-289; phosphorylation suppresses DAPK1 pro-apoptotic function. Autophosphorylation at Ser-308 inhibits its catalytic activity. Phosphorylation at Ser-734 by MAPK1 increases its catalytic activity and promotes cytoplasmic retention of MAPK1. Endoplasmic-stress can cause dephosphorylation at Ser-308. As to expression, high levels in bladder, uterus, vas deferens, lung, liver and kidney.

It carries out the reaction L-seryl-[protein] + ATP = O-phospho-L-seryl-[protein] + ADP + H(+). The enzyme catalyses L-threonyl-[protein] + ATP = O-phospho-L-threonyl-[protein] + ADP + H(+). Its activity is regulated as follows. Activated by Ca(2+)/calmodulin. Regulated by a locking mechanism, involving autophosphorylation at Ser-308 and calmodulin binding. In the inactive state, Ser-308 is phosphorylated. Activation involves its dephosphorylation and a release-of-autoinhibition mechanism where binding of calmodulin induces a conformational change that relieves the steric block of the active site by the autoinhibitory domain. Activity is modulated by UNC5B and NTN1. UNC5B activates it by inhibiting the phosphorylation at Ser-308, whereas NTN1 inhibits UNC5B-mediated activation of DAPK1. Endoplasmic-stress activates by causing Ser-308 dephosphorylation. Functionally, calcium/calmodulin-dependent serine/threonine kinase involved in multiple cellular signaling pathways that trigger cell survival, apoptosis, and autophagy. Regulates both type I apoptotic and type II autophagic cell deaths signal, depending on the cellular setting. The former is caspase-dependent, while the latter is caspase-independent and is characterized by the accumulation of autophagic vesicles. Phosphorylates PIN1 resulting in inhibition of its catalytic activity, nuclear localization, and cellular function. Phosphorylates TPM1, enhancing stress fiber formation in endothelial cells. Phosphorylates STX1A and significantly decreases its binding to STXBP1. Phosphorylates PRKD1 and regulates JNK signaling by binding and activating PRKD1 under oxidative stress. Phosphorylates BECN1, reducing its interaction with BCL2 and BCL2L1 and promoting the induction of autophagy. Phosphorylates TSC2, disrupting the TSC1-TSC2 complex and stimulating mTORC1 activity in a growth factor-dependent pathway. Phosphorylates RPS6, MYL9 and DAPK3. Acts as a signaling amplifier of NMDA receptors at extrasynaptic sites for mediating brain damage in stroke. Cerebral ischemia recruits DAPK1 into the NMDA receptor complex and it phosphorylates GRINB at Ser-1303 inducing injurious Ca(2+) influx through NMDA receptor channels, resulting in an irreversible neuronal death. Required together with DAPK3 for phosphorylation of RPL13A upon interferon-gamma activation which is causing RPL13A involvement in transcript-selective translation inhibition. This Mus musculus (Mouse) protein is Death-associated protein kinase 1 (Dapk1).